Consider the following 663-residue polypeptide: MIDKRDDKPFKLKSKYKPSGDQPQAIESLVDNIEGGEKAQILLGATGTGKTYTMSQVISKVNKPTLVIAHNKTLAGQLYGEFKEFFPDNAVEYFVSYYDYYQPEAYVPSSDTYIEKDSSVNDEIDKLRHSATSSLLERNDVIVVASVSCIYGLGSPKEYADSAVSLRPGQEISRDTLLNQLVDIQFERNDIDFQRGCFRVRGDVVEVFPASRDEHAFRVEFFGDEIDRICEIESLTGKTIGEVDHLVLFPATHFVTNDEHMEQSIAKIQAELAEQLQLFESEGKLLEAQRLRQRTEYDIEMLREMGYTSGVENYSRHMDGRSPGEPPYTLLDFFPEDFLIMIDESHMTMGQIKGMYNGDQARKQMLVDYGFRLPSALDNRPLRREEFESHVHQIVYVSATPGEYEMSQTNTIIEQIIRPTGLLDPEIDVRPSMGQIDDLLGEINQRVARDERTFITTLTKKMAEDLTDYLKEMGVKVKYMHSDIKTLERTEIIRDLRLGVFDVLIGINLLREGIDVPEVSLVAILDADKEGFLRNERGLIQTIGRAARNVDGHVIMYADKMTDSMQRAIDETARRREIQIAYNKAHGIVPQTIKKDIRGLISISKTSHNDISKEEMDYESMSRGERKEAINALQKQMQEAAELLDFELAAQMRDLILELKLMD.

A compositionally biased stretch (basic and acidic residues) spans 1-10; it reads MIDKRDDKPF. A disordered region spans residues 1-23; sequence MIDKRDDKPFKLKSKYKPSGDQP. Residues 31-271 form the Helicase ATP-binding domain; the sequence is DNIEGGEKAQ…EQSIAKIQAE (241 aa). Residue 44 to 51 coordinates ATP; sequence GATGTGKT. The Beta-hairpin motif lies at 97 to 120; that stretch reads YYDYYQPEAYVPSSDTYIEKDSSV. One can recognise a Helicase C-terminal domain in the interval 435-601; sequence QIDDLLGEIN…TIKKDIRGLI (167 aa). The UVR domain occupies 627-662; that stretch reads KEAINALQKQMQEAAELLDFELAAQMRDLILELKLM.

It belongs to the UvrB family. Forms a heterotetramer with UvrA during the search for lesions. Interacts with UvrC in an incision complex.

The protein localises to the cytoplasm. In terms of biological role, the UvrABC repair system catalyzes the recognition and processing of DNA lesions. A damage recognition complex composed of 2 UvrA and 2 UvrB subunits scans DNA for abnormalities. Upon binding of the UvrA(2)B(2) complex to a putative damaged site, the DNA wraps around one UvrB monomer. DNA wrap is dependent on ATP binding by UvrB and probably causes local melting of the DNA helix, facilitating insertion of UvrB beta-hairpin between the DNA strands. Then UvrB probes one DNA strand for the presence of a lesion. If a lesion is found the UvrA subunits dissociate and the UvrB-DNA preincision complex is formed. This complex is subsequently bound by UvrC and the second UvrB is released. If no lesion is found, the DNA wraps around the other UvrB subunit that will check the other stand for damage. The protein is UvrABC system protein B of Streptococcus pyogenes serotype M5 (strain Manfredo).